The primary structure comprises 3739 residues: Cardiomyopathy-associated protein 5 (3739 aa).

13 disordered regions span residues 1 to 205 (MESG…PPIT), 268 to 814 (SLEP…SAFV), 835 to 884 (VSVS…AIQS), 967 to 1270 (LSED…SDVP), 1288 to 1313 (TQAS…RDAK), 1325 to 1637 (SSAL…NLVS), 1650 to 1969 (EMNR…EKGK), 1986 to 2016 (SSIP…AIEP), 2065 to 2246 (FLSN…WETR), 2273 to 2318 (AVGE…LALD), 2377 to 2498 (VYPE…SAVE), 2513 to 2532 (KKQE…TSKD), and 2579 to 2616 (SADG…SEDQ). Residues 18 to 47 (ADEEVAQELETEEESEGEGEETAAESEEEP) are compositionally biased toward acidic residues. Residues 48-62 (DARLSDEDEEGKTKQ) show a composition bias toward basic and acidic residues. The span at 84-106 (TWETNSSRSSTPWASGESQTSGI) shows a compositional bias: polar residues. The segment covering 130–153 (RTRKRTQKSKRGSPSLRRKGSKKR) has biased composition (basic residues). Ser155 is modified (phosphoserine). 2 stretches are compositionally biased toward polar residues: residues 156–175 (LESQ…SESP) and 325–336 (ADSNLNVPSSTE). Residues 380–406 (ATMVLERAKEELEQNAQGKESSEDDAS) are a coiled coil. 3 stretches are compositionally biased toward basic and acidic residues: residues 479-637 (IVHR…REEE), 644-663 (SIVH…REEE), and 670-730 (SIVH…ERGV). 2 repeat units span residues 482–493 (REEEHAPEPIVH) and 494–505 (REEEHAPEPIVH). The interval 482-720 (REEEHAPEPI…EEHAPEPMVH (239 aa)) is 20 X 12 AA approximate tandem repeats of R-[DE]-[EK]-[EG]-H-[AV]-P-E-[PS]-[IM]-V-[HLR]. One copy of the 3; approximate repeat lies at 506 to 519 (REEEHAPEPESIVH). Copy 4 of the repeat occupies 520 to 531 (REEEHAPESIVH). One copy of the 5; approximate repeat lies at 532-545 (REEEHAPEPVPIVH). The 6; approximate repeat unit spans residues 546-559 (REEEHAPEPESIVH). A run of 4 repeats spans residues 560-571 (REEEHAPEPIVH), 572-583 (RDKGHALEPIVH), 584-595 (REEEHAPEPIVH), and 596-607 (RDEGHAPEPIVH). The 11; approximate repeat unit spans residues 608–621 (REEEHVPEPESIVR). The 12; approximate repeat unit spans residues 622–633 (KGEEHAPEPIVH). The stretch at 634–647 (REEEQVPEPESIVH) is one 14; approximate repeat. Residues 648–659 (REEEHAPEPIVH) form repeat 15. A 16; approximate repeat occupies 660-673 (REEEQVPEPESIVH). A run of 4 repeats spans residues 674-685 (REEEHAPEPMVL), 686-696 (REEHAPEPIVR), 697-708 (REEEHAPEPIVH), and 709-720 (REEEHAPEPMVH). A compositionally biased stretch (acidic residues) spans 740–756 (TEPEDSSLEEEIIELDY). At Ser850 the chain carries Phosphoserine. Composition is skewed to polar residues over residues 861–884 (PAMT…AIQS) and 1151–1161 (CLTSPSEQTVL). Composition is skewed to basic and acidic residues over residues 1188 to 1197 (AETEQNKVEP) and 1230 to 1242 (EHSE…EESS). A compositionally biased stretch (polar residues) spans 1337 to 1351 (TSVLPTSQPSVSPES). Basic and acidic residues-rich tracts occupy residues 1441–1460 (LEQR…HSPP) and 1476–1486 (TEVKQESKITR). Positions 1522-1540 (ASSSATTVPVTKLDSNSTK) are enriched in polar residues. Composition is skewed to basic and acidic residues over residues 1620–1631 (NDKHEEITRSPD), 1697–1706 (IDSRDRDRSL), 1726–1742 (GPAE…ENRK), 1760–1770 (IEQKEPKRTLH), 1786–1803 (DKPE…ENLE), and 1836–1850 (EKPD…DRKP). A compositionally biased stretch (polar residues) spans 1854–1863 (QLESSESTDL). Composition is skewed to basic and acidic residues over residues 1874 to 1885 (DTDHTSETRNQE), 1896 to 1916 (LSQE…EGRK), 1992 to 2001 (KVSDNEDLET), and 2153 to 2165 (ARKE…HKET). Over residues 2181–2190 (KSAQSAFTRM) the composition is skewed to polar residues. Ser2192 carries the post-translational modification Phosphoserine. Basic and acidic residues-rich tracts occupy residues 2212–2244 (GEDR…DGWE), 2279–2299 (RMPE…RLEQ), 2306–2318 (KLME…LALD), 2377–2419 (VYPE…ETDG), and 2429–2448 (ELEK…RRFV). The residue at position 2411 (Ser2411) is a Phosphoserine. Residue Ser2495 is modified to Phosphoserine. Residues 2513 to 2523 (KKQETWSDRPT) show a composition bias toward basic and acidic residues. A coiled-coil region spans residues 2640-2664 (SVDQEESEQMQDKLQYLEEKASFKS). Disordered regions lie at residues 2667-2725 (VHDE…QPTV), 2742-2773 (LSPG…SSAE), 2791-2835 (GPEK…GMPL), 2881-2959 (EKNE…EREI), 3027-3047 (LESE…DVNL), and 3111-3174 (PEEP…QKEP). Basic and acidic residues predominate over residues 2682 to 2709 (SKLEVPDRKITSLKENKTKETHKTKEEI). A required for RYR2 clustering region spans residues 2731-3041 (YFEKYTLIDY…SSQGNEAGNA (311 aa)). Polar residues predominate over residues 2762–2773 (KTLTSFPESSAE). Basic and acidic residues-rich tracts occupy residues 2791 to 2804 (GPEK…HAEM) and 2812 to 2828 (KPDD…DVDS). Ser2905 carries the phosphoserine modification. Residues 2918 to 2929 (YILKDDILHDES) are compositionally biased toward basic and acidic residues. Residues 3030–3047 (EPSSQGNEAGNASPDVNL) show a composition bias toward polar residues. A compositionally biased stretch (basic and acidic residues) spans 3153–3162 (VWDRTEDQSA). The amphipathic helix H1 stretch occupies residues 3187–3214 (KSLVSEMDKALDIHKDHEVSALDTAISA). Positions 3215 to 3342 (VKVQLGEFLE…ERLLSAMEST (128 aa)) are B-box coiled-coil; BBC. The stretch at 3244–3323 (FNTIEEKCSK…REAEELDETV (80 aa)) forms a coiled coil. The amphipathic helix H2 stretch occupies residues 3301 to 3318 (SMDTAKDTLETIVREAEE). 2 Fibronectin type-III domains span residues 3374-3475 (VPQP…TAPS) and 3476-3568 (TPVI…TRGT). The tract at residues 3421 to 3437 (EINELVEEYRLTVKESC) is amphipathic helix H3. The region spanning 3550–3735 (NASGTSEQSE…LHLGLEPPDS (186 aa)) is the B30.2/SPRY domain.

In terms of assembly, interacts with PRKAR2A. Interacts with ACTN2, DES and DTNBP1/dysbindin. Interacts with DMD/dystrophin. Interacts with the calcineurin catalytic subunit PPP3CA. Interacts with TTN. Interacts with CAPN3; this interaction, which results in CMYA5 proteolysis, may protect CAPN3 from autolysis. Interacts with FSD2. In cardiac muscles, identified in a complex composed of FSD2, CMYA5 and RYR2. In terms of processing, phosphorylated by PKA. Expressed in skin as well as in cardiac muscle. Expressed in skeletal muscle (at protein level).

The protein resides in the nucleus. The protein localises to the cytoplasm. It localises to the perinuclear region. It is found in the myofibril. Its subcellular location is the sarcomere. The protein resides in the m line. The protein localises to the sarcoplasmic reticulum. May serve as an anchoring protein that mediates the subcellular compartmentation of protein kinase A (PKA) via binding to PRKAR2A. May attenuate calcineurin ability to induce slow-fiber gene program in muscle and may negatively modulate skeletal muscle regeneration. Plays a role in the assembly of ryanodine receptor (RYR2) clusters in striated muscle. This Mus musculus (Mouse) protein is Cardiomyopathy-associated protein 5 (Cmya5).